The chain runs to 498 residues: N-acyl-D-aspartate deacylase (498 aa).

The disordered stretch occupies residues 478 to 498 (AERPGQVLAPGDAIPWSQQSE).

This sequence belongs to the metallo-dependent hydrolases superfamily. N-acyl-D-amino-acid deacylase family. It depends on Zn(2+) as a cofactor.

The protein localises to the cytoplasm. It carries out the reaction an N-acyl-D-aspartate + H2O = D-aspartate + a carboxylate. The protein is N-acyl-D-aspartate deacylase of Alcaligenes xylosoxydans xylosoxydans (Achromobacter xylosoxidans).